Here is a 232-residue protein sequence, read N- to C-terminus: tRNA-uridine aminocarboxypropyltransferase (232 aa).

The Zn(2+) site is built by C31, C34, C41, and C43. Positions 137–140 (DGTW) match the DXTW motif.

It belongs to the TDD superfamily. DTWD2 family. TapT subfamily. In terms of assembly, monomer in solution.

It carries out the reaction a uridine in tRNA + S-adenosyl-L-methionine = a 3-[(3S)-3-amino-3-carboxypropyl]uridine in tRNA + S-methyl-5'-thioadenosine + H(+). The enzyme catalyses uridine(47) in tRNA(Phe) + S-adenosyl-L-methionine = 3-[(3S)-3-amino-3-carboxypropyl]uridine(47) in tRNA(Phe) + S-methyl-5'-thioadenosine + H(+). With respect to regulation, the degree of the acp3U modification at U47 is dependent on the presence of the m7G modification at the preceding nucleotide G46. It also depends on medium conditions. Its function is as follows. Catalyzes the formation of 3-(3-amino-3-carboxypropyl)uridine (acp3U) at position 47 of tRNAs. Acp3U47 confers thermal stability on tRNA. This chain is tRNA-uridine aminocarboxypropyltransferase, found in Escherichia coli (strain K12).